Consider the following 1148-residue polypeptide: Envelopment polyprotein (1148 aa).

Positions 1–23 (MGELSPVCLYLLLQGLLLCNTGA) are cleaved as a signal peptide. Residues 24–495 (ARNLNELKME…VPGLHGWATM (472 aa)) are Lumenal-facing. Intrachain disulfides connect cysteine 34-cysteine 159, cysteine 68-cysteine 165, cysteine 117-cysteine 136, cysteine 141-cysteine 146, cysteine 183-cysteine 193, and cysteine 218-cysteine 257. A glycan (N-linked (GlcNAc...) asparagine; by host) is linked at asparagine 142. N-linked (GlcNAc...) asparagine; by host glycosylation occurs at asparagine 357. 4 disulfide bridges follow: cysteine 386–cysteine 445, cysteine 390–cysteine 399, cysteine 415–cysteine 434, and cysteine 462–cysteine 485. N-linked (GlcNAc...) asparagine; by host glycosylation occurs at asparagine 409. The helical transmembrane segment at 496–516 (LLLLTFCFGWVLIPTITMILL) threads the bilayer. At 517–637 (KILIAFAYLC…LSLFRYRSRF (121 aa)) the chain is on the cytoplasmic side. The interval 526–543 (CSKYNTDSKFRILIEKVK) is binding to the ribonucleoprotein. 2 consecutive CCHC-type zinc fingers follow at residues 555–575 (CEVC…RKSC) and 580–601 (CPYC…FKVC). 3 binding to the ribonucleoprotein regions span residues 598–615 (FKVC…RKSL), 602–613 (KLRSRFQENLRK), and 621–635 (MQGC…RYRS). In terms of domain architecture, ITAM spans 621–644 (MQGCYRTLSLFRYRSRFFVGLVWC). The YxxL motif lies at 625–628 (YRTL). Residues 638–658 (FVGLVWCVLLVHHLIVWAASA) form a helical membrane-spanning segment. Residues 659-1114 (ETQNLNAGWT…EWILGVLNGN (456 aa)) lie on the Lumenal side of the membrane. Disulfide bonds link cysteine 745–cysteine 780, cysteine 749–cysteine 787, cysteine 761–cysteine 894, cysteine 775–cysteine 905, cysteine 790–cysteine 913, cysteine 816–cysteine 825, cysteine 833–cysteine 842, and cysteine 873–cysteine 877. Positions 767-787 (YEYETGWGCNPPDCPGVGTGC) are fusion loop. The N-linked (GlcNAc...) asparagine; by host glycan is linked to asparagine 937. 5 cysteine pairs are disulfide-bonded: cysteine 979-cysteine 1009, cysteine 1002-cysteine 1054, cysteine 1019-cysteine 1024, cysteine 1055-cysteine 1060, and cysteine 1094-cysteine 1098. A helical transmembrane segment spans residues 1115–1135 (WMVVAVLVVLLILSILLFTLC). Binding to the ribonucleoprotein regions lie at residues 1131–1143 (LFTL…PSYR) and 1131–1148 (LFTL…EHKP). Residues 1136–1148 (CPRRPSYRKEHKP) are Cytoplasmic-facing.

The protein belongs to the hantavirus envelope glycoprotein family. In terms of assembly, homodimer. Homotetramer; forms heterotetrameric Gn-Gc spikes in the pre-fusion conformation. Interacts (via C-terminus) with the nucleoprotein. Interacts with host TUFM; this interaction contributes to the virus-induced degradation of mitochondria by autophagy, which leads to degradation of host MAVS and inhibition of type I interferon (IFN) responses. Interacts with host MAP1LC3B; this interaction contributes to the virus-induced degradation of mitochondria by autophagy, which leads to degradation of host MAVS and inhibition of type I interferon (IFN) responses. Homodimer. Homotetramer; forms heterotetrameric Gn-Gc spikes in the pre-fusion conformation. Homotrimer; forms homotrimer in the post-fusion conformation at acidic pH. Interacts (via C-terminus) with the nucleoprotein. Envelope polyprotein precursor is quickly cleaved in vivo just after synthesis, presumably by host signal peptidase.

It is found in the virion membrane. The protein localises to the host cell surface. Its subcellular location is the host Golgi apparatus membrane. The protein resides in the host endoplasmic reticulum membrane. It localises to the host mitochondrion. In terms of biological role, forms homotetramers with glycoprotein C at the surface of the virion. Attaches the virion to host cell receptors including integrin ITGAV/ITGB3. This attachment induces virion internalization predominantly through clathrin-dependent endocytosis. Mediates the assembly and budding of infectious virus particles through its interaction with the nucleocapsid protein and the viral genome. May dysregulate normal immune and endothelial cell responses through an ITAM motif. Translocates to mitochondria, binds to host TUFM and recruits MAP1LC3B. These interactions induce mitochondrial autophagy and therefore destruction of host MAVS leading to inhibition of type I interferon (IFN) responses. Concomitant breakdown of glycoprotein N is apparently prevented by the nucleoprotein that may inhibit Gn-stimulated autophagosome-lysosome fusion. Interacts with the viral genomic RNA. Its function is as follows. Forms homotetramers with glycoprotein N at the surface of the virion. Attaches the virion to host cell receptors including integrin ITGAV/ITGB3. This attachment induces virion internalization predominantly through clathrin-dependent endocytosis. Class II fusion protein that promotes fusion of viral membrane with host endosomal membrane after endocytosis of the virion. This is Envelopment polyprotein (GP) from Homo sapiens (Human).